The sequence spans 40 residues: Photosystem II reaction center protein J (40 aa).

The chain crosses the membrane as a helical span at residues 8-28; the sequence is IPLWIIGTVTGLLVIGLIGIF.

It belongs to the PsbJ family. In terms of assembly, PSII is composed of 1 copy each of membrane proteins PsbA, PsbB, PsbC, PsbD, PsbE, PsbF, PsbH, PsbI, PsbJ, PsbK, PsbL, PsbM, PsbT, PsbX, PsbY, PsbZ, Psb30/Ycf12, at least 3 peripheral proteins of the oxygen-evolving complex and a large number of cofactors. It forms dimeric complexes.

It localises to the plastid. The protein resides in the chloroplast thylakoid membrane. One of the components of the core complex of photosystem II (PSII). PSII is a light-driven water:plastoquinone oxidoreductase that uses light energy to abstract electrons from H(2)O, generating O(2) and a proton gradient subsequently used for ATP formation. It consists of a core antenna complex that captures photons, and an electron transfer chain that converts photonic excitation into a charge separation. The chain is Photosystem II reaction center protein J from Ipomoea purpurea (Common morning glory).